The primary structure comprises 273 residues: HLA class II histocompatibility antigen, DO beta chain (273 aa).

Residues 1 to 26 (MGSGWVPWVVALLVNLTRLDSSMTQG) form the signal peptide. A beta-1 region spans residues 27 to 120 (TDSPEDFVIQ…LGAPFTVGRK (94 aa)). Residues 27 to 224 (TDSPEDFVIQ…RAQSEYSWRK (198 aa)) are Extracellular-facing. Disulfide bonds link Cys-41/Cys-105 and Cys-143/Cys-199. Residue Asn-45 is glycosylated (N-linked (GlcNAc...) asparagine). Positions 121-214 (VQPEVTVYPE…SLLSPVSVEW (94 aa)) are beta-2. Residues 123–213 (PEVTVYPERT…SSLLSPVSVE (91 aa)) form the Ig-like C1-type domain. The segment at 215 to 224 (RAQSEYSWRK) is connecting peptide. Residues 225-245 (MLSGIAAFLLGLIFLLVGIVI) traverse the membrane as a helical segment. At 246 to 273 (QLRAQKGYVRTQMSGNEVSRAVLLPQSC) the chain is on the cytoplasmic side.

The protein belongs to the MHC class II family. Heterodimer of an alpha chain (DOA) and a beta chain (DOB). Forms a heterotetrameric complex with an HLA-DM molecule during intracellular transport in endosomal/lysosomal compartments in B-cells.

It localises to the endosome membrane. The protein localises to the lysosome membrane. In terms of biological role, important modulator in the HLA class II restricted antigen presentation pathway by interaction with the HLA-DM molecule in B-cells. Modifies peptide exchange activity of HLA-DM. The protein is HLA class II histocompatibility antigen, DO beta chain (HLA-DOB) of Homo sapiens (Human).